Reading from the N-terminus, the 74-residue chain is UPF0435 protein GTNG_0390 (74 aa).

Belongs to the UPF0435 family.

The chain is UPF0435 protein GTNG_0390 from Geobacillus thermodenitrificans (strain NG80-2).